The primary structure comprises 424 residues: MDGIRVYIETFGCTFNQADSEIMAGVLREEGAVLTGIDDADVIIINTCYVKHPTEHKVINRIKKIQETYPEKGLVVAGCMVEIDPSKLEAISGDASWLGPHQLRRAPQAVRAASNGLVERITGFTSDVKVKVPRVRSNPLIHIIPICEGCNGSCSYCCTRFARGRIQSYPSDLIISEAREAVASGCREIQLTAQDTAAYGVDTGEKLSDIIKGISGIPGNFRIRVGMMHPASVLRDLDGLVEAFKSEKVYSFLHLPVQSGSDSVLADMERGHTVDEFRMIVERFRSEIPDISIATDIIVGYPTEEREDFMDTCSLLEEVKPSFIHLSKYRHRPRARSSSLDEIDFRELRRRSRALEELKMRITEEENRRLVGSFQEILVVERGRKGGFIGRTGSYIPVVTETGEPGSFRRVRIRDATGTYLLAD.

The 112-residue stretch at 4 to 115 folds into the MTTase N-terminal domain; it reads IRVYIETFGC…APQAVRAASN (112 aa). Cysteine 13, cysteine 48, cysteine 79, cysteine 150, cysteine 154, and cysteine 157 together coordinate [4Fe-4S] cluster. The Radical SAM core domain maps to 136 to 365; the sequence is RSNPLIHIIP…EELKMRITEE (230 aa). The 57-residue stretch at 368 to 424 folds into the TRAM domain; sequence RRLVGSFQEILVVERGRKGGFIGRTGSYIPVVTETGEPGSFRRVRIRDATGTYLLAD.

This sequence belongs to the methylthiotransferase family. CDKAL1 subfamily. [4Fe-4S] cluster is required as a cofactor.

The catalysed reaction is N(6)-L-threonylcarbamoyladenosine(37) in tRNA + (sulfur carrier)-SH + AH2 + 2 S-adenosyl-L-methionine = 2-methylsulfanyl-N(6)-L-threonylcarbamoyladenosine(37) in tRNA + (sulfur carrier)-H + 5'-deoxyadenosine + L-methionine + A + S-adenosyl-L-homocysteine + 2 H(+). Its function is as follows. Catalyzes the methylthiolation of N6-threonylcarbamoyladenosine (t(6)A), leading to the formation of 2-methylthio-N6-threonylcarbamoyladenosine (ms(2)t(6)A) at position 37 in tRNAs that read codons beginning with adenine. This chain is Probable threonylcarbamoyladenosine tRNA methylthiotransferase, found in Methanothermobacter thermautotrophicus (strain ATCC 29096 / DSM 1053 / JCM 10044 / NBRC 100330 / Delta H) (Methanobacterium thermoautotrophicum).